Reading from the N-terminus, the 1383-residue chain is WD repeat-containing protein dyf-2 (1383 aa).

WD repeat units follow at residues Glu32–Leu71, Asn72–Val112, Ser118–Val157, Lys160–Thr198, and Glu337–Ser376. 7 TPR repeats span residues Glu756–Leu789, Pro810–Asn847, Arg885–Ala918, Pro940–Val973, Ile996–Phe1029, Leu1031–Gln1053, and Val1064–Val1097.

As to quaternary structure, component of the IFT complex A (IFT-A) composed of at least che-11, daf-10, dyf-2, ift-139, ift-43 and ifta-1. Expressed in ciliated sensory neurons.

The protein resides in the cell projection. Its subcellular location is the cilium. Its function is as follows. Component of the IFT complex A (IFT-A), a complex required for retrograde ciliary transport. Moves along the ciliary axoneme and is involved in the assembly, localization and the movement of other intraflagellar transport (IFT) proteins along the cilia axoneme. May also associate with the BBSome complex in order to mediate ciliary transport. Regulates cilia biogenesis, morphology and sensitivity to environmental cues. The protein is WD repeat-containing protein dyf-2 of Caenorhabditis elegans.